An 89-amino-acid polypeptide reads, in one-letter code: MSLSTEAKAQIIAEFGRDVNDSGSSEVQIALLTAQINHLQGHFSEHKKDHHSRRGLLRMVSQRRKLLDYLKRKNVTSYTALIGRLGLRR.

This sequence belongs to the universal ribosomal protein uS15 family. Part of the 30S ribosomal subunit. Forms a bridge to the 50S subunit in the 70S ribosome, contacting the 23S rRNA.

One of the primary rRNA binding proteins, it binds directly to 16S rRNA where it helps nucleate assembly of the platform of the 30S subunit by binding and bridging several RNA helices of the 16S rRNA. Its function is as follows. Forms an intersubunit bridge (bridge B4) with the 23S rRNA of the 50S subunit in the ribosome. In Photorhabdus laumondii subsp. laumondii (strain DSM 15139 / CIP 105565 / TT01) (Photorhabdus luminescens subsp. laumondii), this protein is Small ribosomal subunit protein uS15.